The chain runs to 156 residues: Small ribosomal subunit protein uS7 (156 aa).

It belongs to the universal ribosomal protein uS7 family. As to quaternary structure, part of the 30S ribosomal subunit. Contacts proteins S9 and S11.

Functionally, one of the primary rRNA binding proteins, it binds directly to 16S rRNA where it nucleates assembly of the head domain of the 30S subunit. Is located at the subunit interface close to the decoding center, probably blocks exit of the E-site tRNA. This is Small ribosomal subunit protein uS7 from Campylobacter concisus (strain 13826).